The sequence spans 396 residues: Acetate kinase (396 aa).

Residue N8 coordinates Mg(2+). ATP is bound at residue K15. Substrate is bound at residue R89. Catalysis depends on D146, which acts as the Proton donor/acceptor. Residues 206-210 (HIGNG), 283-285 (DMR), and 331-335 (GVGEN) each bind ATP. E383 lines the Mg(2+) pocket.

This sequence belongs to the acetokinase family. As to quaternary structure, homodimer. It depends on Mg(2+) as a cofactor. Mn(2+) is required as a cofactor.

The protein localises to the cytoplasm. The catalysed reaction is acetate + ATP = acetyl phosphate + ADP. Its pathway is metabolic intermediate biosynthesis; acetyl-CoA biosynthesis; acetyl-CoA from acetate: step 1/2. Catalyzes the formation of acetyl phosphate from acetate and ATP. Can also catalyze the reverse reaction. This Streptococcus pneumoniae serotype 2 (strain D39 / NCTC 7466) protein is Acetate kinase.